We begin with the raw amino-acid sequence, 257 residues long: Acetylglutamate kinase (257 aa).

Substrate contacts are provided by residues 43–44, arginine 65, and asparagine 157; that span reads GG. ATP is bound by residues 180–185 and 208–210; these read DVSGIL and IIT.

The protein belongs to the acetylglutamate kinase family. ArgB subfamily. Homodimer.

It localises to the cytoplasm. The enzyme catalyses N-acetyl-L-glutamate + ATP = N-acetyl-L-glutamyl 5-phosphate + ADP. It participates in amino-acid biosynthesis; L-arginine biosynthesis; N(2)-acetyl-L-ornithine from L-glutamate: step 2/4. Its function is as follows. Catalyzes the ATP-dependent phosphorylation of N-acetyl-L-glutamate. This is Acetylglutamate kinase from Serratia proteamaculans (strain 568).